Reading from the N-terminus, the 481-residue chain is Cysteine--tRNA ligase (481 aa).

Cys-29 lines the Zn(2+) pocket. The short motif at 31 to 41 (PTVYDYSHLGH) is the 'HIGH' region element. The Zn(2+) site is built by Cys-210, His-235, and Glu-239. The 'KMSKS' region motif lies at 272–276 (KMSKS). Lys-275 contributes to the ATP binding site.

This sequence belongs to the class-I aminoacyl-tRNA synthetase family. In terms of assembly, monomer. Zn(2+) serves as cofactor.

The protein localises to the cytoplasm. The enzyme catalyses tRNA(Cys) + L-cysteine + ATP = L-cysteinyl-tRNA(Cys) + AMP + diphosphate. This is Cysteine--tRNA ligase from Anaeromyxobacter dehalogenans (strain 2CP-1 / ATCC BAA-258).